A 126-amino-acid chain; its full sequence is Aspartate 1-decarboxylase (126 aa).

S25 serves as the catalytic Schiff-base intermediate with substrate; via pyruvic acid. Residue S25 is modified to Pyruvic acid (Ser). T57 is a substrate binding site. The active-site Proton donor is the Y58. Substrate is bound at residue 73–75 (GGA).

This sequence belongs to the PanD family. As to quaternary structure, heterooctamer of four alpha and four beta subunits. Pyruvate is required as a cofactor. Is synthesized initially as an inactive proenzyme, which is activated by self-cleavage at a specific serine bond to produce a beta-subunit with a hydroxyl group at its C-terminus and an alpha-subunit with a pyruvoyl group at its N-terminus.

It localises to the cytoplasm. It catalyses the reaction L-aspartate + H(+) = beta-alanine + CO2. It functions in the pathway cofactor biosynthesis; (R)-pantothenate biosynthesis; beta-alanine from L-aspartate: step 1/1. Its function is as follows. Catalyzes the pyruvoyl-dependent decarboxylation of aspartate to produce beta-alanine. This chain is Aspartate 1-decarboxylase, found in Xylella fastidiosa (strain 9a5c).